The chain runs to 169 residues: Ureidoglycolate lyase (169 aa).

Belongs to the ureidoglycolate lyase family. Homodimer. Ni(2+) is required as a cofactor.

It catalyses the reaction (S)-ureidoglycolate = urea + glyoxylate. It functions in the pathway nitrogen metabolism; (S)-allantoin degradation. Functionally, catalyzes the catabolism of the allantoin degradation intermediate (S)-ureidoglycolate, generating urea and glyoxylate. Involved in the utilization of allantoin as nitrogen source. This Brucella ovis (strain ATCC 25840 / 63/290 / NCTC 10512) protein is Ureidoglycolate lyase.